Here is a 463-residue protein sequence, read N- to C-terminus: tRNA modification GTPase MnmE (463 aa).

(6S)-5-formyl-5,6,7,8-tetrahydrofolate-binding residues include Arg26, Glu88, and Arg127. One can recognise a TrmE-type G domain in the interval 224-383 (GLATAIIGRP…LEQRIAKMFF (160 aa)). Asn234 serves as a coordination point for K(+). GTP contacts are provided by residues 234–239 (NVGKSS), 253–259 (TDVAGTT), and 278–281 (DTAG). Residue Ser238 coordinates Mg(2+). Residues Thr253, Val255, and Thr258 each coordinate K(+). A Mg(2+)-binding site is contributed by Thr259. Lys463 serves as a coordination point for (6S)-5-formyl-5,6,7,8-tetrahydrofolate.

This sequence belongs to the TRAFAC class TrmE-Era-EngA-EngB-Septin-like GTPase superfamily. TrmE GTPase family. Homodimer. Heterotetramer of two MnmE and two MnmG subunits. K(+) is required as a cofactor.

The protein resides in the cytoplasm. Its function is as follows. Exhibits a very high intrinsic GTPase hydrolysis rate. Involved in the addition of a carboxymethylaminomethyl (cmnm) group at the wobble position (U34) of certain tRNAs, forming tRNA-cmnm(5)s(2)U34. This Lactiplantibacillus plantarum (strain ATCC BAA-793 / NCIMB 8826 / WCFS1) (Lactobacillus plantarum) protein is tRNA modification GTPase MnmE.